The primary structure comprises 476 residues: Bifunctional protein HldE (476 aa).

The segment at 1–319 is ribokinase; it reads MKVTLPAFEK…EALKSHQGES (319 aa). ATP is bound at residue 195-198; sequence NMSE. Residue Asp-264 is part of the active site. The tract at residues 345-476 is cytidylyltransferase; it reads MTNGCFDILH…AIIQNIMSRH (132 aa).

In the N-terminal section; belongs to the carbohydrate kinase PfkB family. It in the C-terminal section; belongs to the cytidylyltransferase family. In terms of assembly, homodimer.

It carries out the reaction D-glycero-beta-D-manno-heptose 7-phosphate + ATP = D-glycero-beta-D-manno-heptose 1,7-bisphosphate + ADP + H(+). The enzyme catalyses D-glycero-beta-D-manno-heptose 1-phosphate + ATP + H(+) = ADP-D-glycero-beta-D-manno-heptose + diphosphate. It participates in nucleotide-sugar biosynthesis; ADP-L-glycero-beta-D-manno-heptose biosynthesis; ADP-L-glycero-beta-D-manno-heptose from D-glycero-beta-D-manno-heptose 7-phosphate: step 1/4. It functions in the pathway nucleotide-sugar biosynthesis; ADP-L-glycero-beta-D-manno-heptose biosynthesis; ADP-L-glycero-beta-D-manno-heptose from D-glycero-beta-D-manno-heptose 7-phosphate: step 3/4. Catalyzes the phosphorylation of D-glycero-D-manno-heptose 7-phosphate at the C-1 position to selectively form D-glycero-beta-D-manno-heptose-1,7-bisphosphate. Its function is as follows. Catalyzes the ADP transfer from ATP to D-glycero-beta-D-manno-heptose 1-phosphate, yielding ADP-D-glycero-beta-D-manno-heptose. This Shewanella amazonensis (strain ATCC BAA-1098 / SB2B) protein is Bifunctional protein HldE.